The primary structure comprises 466 residues: Ribulose bisphosphate carboxylase large chain (466 aa).

Lys5 is modified (N6,N6,N6-trimethyllysine). Substrate-binding residues include Asn114 and Thr164. Lys166 acts as the Proton acceptor in catalysis. A substrate-binding site is contributed by Lys168. Residues Lys192, Asp194, and Glu195 each coordinate Mg(2+). N6-carboxylysine is present on Lys192. His285 functions as the Proton acceptor in the catalytic mechanism. Residues Arg286, His318, and Ser370 each coordinate substrate.

This sequence belongs to the RuBisCO large chain family. Type I subfamily. As to quaternary structure, heterohexadecamer of 8 large chains and 8 small chains; disulfide-linked. The disulfide link is formed within the large subunit homodimers. It depends on Mg(2+) as a cofactor. The disulfide bond which can form in the large chain dimeric partners within the hexadecamer appears to be associated with oxidative stress and protein turnover.

The protein localises to the plastid. It is found in the chloroplast. The catalysed reaction is 2 (2R)-3-phosphoglycerate + 2 H(+) = D-ribulose 1,5-bisphosphate + CO2 + H2O. It carries out the reaction D-ribulose 1,5-bisphosphate + O2 = 2-phosphoglycolate + (2R)-3-phosphoglycerate + 2 H(+). RuBisCO catalyzes two reactions: the carboxylation of D-ribulose 1,5-bisphosphate, the primary event in carbon dioxide fixation, as well as the oxidative fragmentation of the pentose substrate in the photorespiration process. Both reactions occur simultaneously and in competition at the same active site. The protein is Ribulose bisphosphate carboxylase large chain of Drosera filiformis (Thread-leaved sundew).